The sequence spans 139 residues: uncharacterized protein (139 aa).

The protein to E.coli YebE.

This is an uncharacterized protein from Yersinia enterocolitica.